The chain runs to 410 residues: Peptidase T (410 aa).

His79 lines the Zn(2+) pocket. Residue Asp81 is part of the active site. Asp142 contacts Zn(2+). The active-site Proton acceptor is Glu176. Positions 177, 199, and 381 each coordinate Zn(2+).

Belongs to the peptidase M20B family. Requires Zn(2+) as cofactor.

The protein localises to the cytoplasm. It catalyses the reaction Release of the N-terminal residue from a tripeptide.. Functionally, cleaves the N-terminal amino acid of tripeptides. The sequence is that of Peptidase T from Listeria monocytogenes serotype 4b (strain CLIP80459).